Here is a 114-residue protein sequence, read N- to C-terminus: Large ribosomal subunit protein bL21c (114 aa).

Belongs to the bacterial ribosomal protein bL21 family. In terms of assembly, part of the 50S ribosomal subunit.

The protein localises to the plastid. It is found in the chloroplast. This protein binds to 23S rRNA. In Staurastrum punctulatum (Green alga), this protein is Large ribosomal subunit protein bL21c.